Here is a 366-residue protein sequence, read N- to C-terminus: Autophagy-related protein 18b (366 aa).

3 WD repeats span residues S6–E44, A178–S218, and T223–S265.

The protein belongs to the WD repeat PROPPIN family. In terms of assembly, component of the PI(3,5)P2 regulatory complex at least composed of ATG18, SAC/FIG4, FAB1 and VAC14. As to expression, expressed in roots, stems, flowers and leaves.

The protein resides in the preautophagosomal structure membrane. The protein localises to the vacuole membrane. The PI(3,5)P2 regulatory complex regulates both the synthesis and turnover of phosphatidylinositol 3,5-bisphosphate (PtdIns(3,5)P2). Required for autophagy. The polypeptide is Autophagy-related protein 18b (ATG18B) (Arabidopsis thaliana (Mouse-ear cress)).